We begin with the raw amino-acid sequence, 185 residues long: Peptide deformylase (185 aa).

Residues Cys112 and His155 each coordinate Fe cation. Glu156 is a catalytic residue. Fe cation is bound at residue His159.

Belongs to the polypeptide deformylase family. It depends on Fe(2+) as a cofactor.

The catalysed reaction is N-terminal N-formyl-L-methionyl-[peptide] + H2O = N-terminal L-methionyl-[peptide] + formate. Removes the formyl group from the N-terminal Met of newly synthesized proteins. Requires at least a dipeptide for an efficient rate of reaction. N-terminal L-methionine is a prerequisite for activity but the enzyme has broad specificity at other positions. This is Peptide deformylase from Latilactobacillus sakei subsp. sakei (strain 23K) (Lactobacillus sakei subsp. sakei).